Consider the following 458-residue polypeptide: NADH-quinone oxidoreductase subunit N (458 aa).

A run of 14 helical transmembrane segments spans residues 2–22, 30–50, 71–91, 93–113, 118–138, 153–173, 196–216, 235–255, 261–281, 290–310, 319–339, 361–381, 397–417, and 438–458; these read LLLL…CFAL, IIYN…FKYS, IILL…ILVG, TLKF…FVAI, FLLL…LAGF, FILG…IYGF, LIIG…SSPL, FTAA…KLII, INYN…AFGA, LMAY…LLHN, LYIL…IMLF, IAAL…LTGF, FTLA…YLKV, and LLLI…IILF.

Belongs to the complex I subunit 2 family. As to quaternary structure, NDH-1 is composed of 14 different subunits. Subunits NuoA, H, J, K, L, M, N constitute the membrane sector of the complex.

It is found in the cell inner membrane. It carries out the reaction a quinone + NADH + 5 H(+)(in) = a quinol + NAD(+) + 4 H(+)(out). In terms of biological role, NDH-1 shuttles electrons from NADH, via FMN and iron-sulfur (Fe-S) centers, to quinones in the respiratory chain. The immediate electron acceptor for the enzyme in this species is believed to be ubiquinone. Couples the redox reaction to proton translocation (for every two electrons transferred, four hydrogen ions are translocated across the cytoplasmic membrane), and thus conserves the redox energy in a proton gradient. The protein is NADH-quinone oxidoreductase subunit N of Rickettsia prowazekii (strain Madrid E).